A 239-amino-acid polypeptide reads, in one-letter code: Ribosomal RNA small subunit methyltransferase G (239 aa).

S-adenosyl-L-methionine is bound by residues Gly-78, Phe-83, Ala-129–Glu-130, and Arg-148.

The protein belongs to the methyltransferase superfamily. RNA methyltransferase RsmG family.

The protein localises to the cytoplasm. In terms of biological role, specifically methylates the N7 position of a guanine in 16S rRNA. The polypeptide is Ribosomal RNA small subunit methyltransferase G (Clostridium botulinum (strain Okra / Type B1)).